We begin with the raw amino-acid sequence, 99 residues long: High mobility group nucleosome-binding domain-containing protein 3 (99 aa).

3 stretches are compositionally biased toward basic and acidic residues: residues 1–25 (MPKR…EPTR), 39–53 (PEPK…KEPG), and 62–72 (GKKEEKQEAGK). The disordered stretch occupies residues 1–99 (MPKRKSPENT…KTESVDNEGE (99 aa)). Ser-6 bears the Phosphoserine mark. Residue Thr-10 is modified to Phosphothreonine. 2 positions are modified to phosphoserine: Ser-78 and Ser-93. The span at 81 to 93 (GETKAEEAQKTES) shows a compositional bias: basic and acidic residues.

Belongs to the HMGN family. As to quaternary structure, interacts with the ligand binding domain of the thyroid receptor (TR) (in vitro). Requires the presence of thyroid hormone for its interaction. Interacts with transcriptional regulator SEHBP. Interacts with nucleosomes.

The protein resides in the nucleus. Binds to nucleosomes, regulating chromatin structure and consequently, chromatin-dependent processes such as transcription, DNA replication and DNA repair. Affects both insulin and glucagon levels and modulates the expression of pancreatic genes involved in insulin secretion. Regulates the expression of the glucose transporter SLC2A2 by binding specifically to its promoter region and recruiting PDX1 and additional transcription factors. Regulates the expression of SLC6A9, a glycine transporter which regulates the glycine concentration in synaptic junctions in the central nervous system, by binding to its transcription start site. May play a role in ocular development and astrocyte function. The polypeptide is High mobility group nucleosome-binding domain-containing protein 3 (HMGN3) (Pongo abelii (Sumatran orangutan)).